We begin with the raw amino-acid sequence, 214 residues long: CASP-like protein 0U1 (214 aa).

At 1–82 the chain is on the cytoplasmic side; sequence MATSEAPLLK…GFTSFYQFKG (82 aa). A helical membrane pass occupies residues 83 to 103; sequence VVGVYAAFWVYTVLLIGLYLF. The Extracellular portion of the chain corresponds to 104 to 112; sequence SRGPPPGTE. The helical transmembrane segment at 113-133 threads the bilayer; sequence FVVHALFTLCMIAFVSLSVIS. At 134 to 153 the chain is on the cytoplasmic side; sequence CTSTVIESDYSVCKNAAYAK. The helical transmembrane segment at 154 to 174 threads the bilayer; sequence ASLVFAALVVVLNCATCAFVF. The Extracellular segment spans residues 175–214; that stretch reads KQWRSLQFVGMPENFRPFGRHRHKHGHHAGDADDAIPTHP. The interval 194–214 is disordered; the sequence is RHRHKHGHHAGDADDAIPTHP.

Belongs to the Casparian strip membrane proteins (CASP) family. Homodimer and heterodimers.

The protein localises to the cell membrane. The protein is CASP-like protein 0U1 of Ostreococcus tauri.